We begin with the raw amino-acid sequence, 842 residues long: Elongation factor G, mitochondrial (842 aa).

The N-terminal 58 residues, 1-58 (MVAIPRVAAARSLARQLARQSLRTTSFASAPVRIAIASTPLARSPSSFRSLSSSTRRS), are a transit peptide targeting the mitochondrion. One can recognise a tr-type G domain in the interval 93–398 (VRQRNVGISA…GVCSYLPNPA (306 aa)). GTP contacts are provided by residues 102 to 109 (AHIDSGKT), 196 to 200 (DTPGH), and 250 to 253 (NKMD). Positions 423-442 (AGEDQEAAAEARKNAAPPVL) are disordered.

The protein belongs to the TRAFAC class translation factor GTPase superfamily. Classic translation factor GTPase family. EF-G/EF-2 subfamily.

The protein localises to the mitochondrion. Its pathway is protein biosynthesis; polypeptide chain elongation. Functionally, mitochondrial GTPase that catalyzes the GTP-dependent ribosomal translocation step during translation elongation. During this step, the ribosome changes from the pre-translocational (PRE) to the post-translocational (POST) state as the newly formed A-site-bound peptidyl-tRNA and P-site-bound deacylated tRNA move to the P and E sites, respectively. Catalyzes the coordinated movement of the two tRNA molecules, the mRNA and conformational changes in the ribosome. The chain is Elongation factor G, mitochondrial from Mycosarcoma maydis (Corn smut fungus).